Consider the following 250-residue polypeptide: uncharacterized protein (250 aa).

An N-terminal signal peptide occupies residues 1 to 17; the sequence is MRTLVLLSSVAILSTLA. 4 N-linked (GlcNAc...) asparagine glycosylation sites follow: Asn48, Asn159, Asn223, and Asn239.

It is found in the secreted. This is an uncharacterized protein from Caenorhabditis elegans.